Here is a 355-residue protein sequence, read N- to C-terminus: uncharacterized protein (355 aa).

An ATP-binding site is contributed by 58–65 (GYIIFGIK).

This is an uncharacterized protein from Ureaplasma parvum serovar 3 (strain ATCC 700970).